The following is a 195-amino-acid chain: MAAAAAVRAGVNFTQRLNRISPVCRVCPLLRLNRCTGAAVRRAVDGFSAPSRRLRTSIGVCQSEDSSAPEEDAHAQEHIVNVVYIDRSGRRIPVQARVGDNVLYLAHKHGIDLEGACEASLACSTCHVYVSSGHYDRLPEPEEREDDMLDMAPLLQENSRLGCQIILTPELDGMELTLPKVTRNFYVDGHVPKPH.

A mitochondrion-targeting transit peptide spans 1–61 (MAAAAAVRAG…RRLRTSIGVC (61 aa)). Positions 81 to 182 (NVVYIDRSGR…GMELTLPKVT (102 aa)) constitute a 2Fe-2S ferredoxin-type domain. Residues Cys-117, Cys-123, Cys-126, and Cys-163 each coordinate [2Fe-2S] cluster.

Belongs to the adrenodoxin/putidaredoxin family. In terms of assembly, component of the mitochondrial core iron-sulfur cluster (ISC) complex composed of NFS1, LYRM4, NDUFAB1, ISCU, FXN, and FDX2; this complex is a heterohexamer containing two copies of each monomer. Form a heterodimer complex with NFS1. The cofactor is [2Fe-2S] cluster.

It is found in the mitochondrion. The protein resides in the mitochondrion matrix. In terms of biological role, electron donor, of the core iron-sulfur cluster (ISC) assembly complex, that acts to reduce the persulfide into sulfide during [2Fe-2S] clusters assembly on the scaffolding protein ISCU. The core iron-sulfur cluster (ISC) assembly complex is involved in the de novo synthesis of a [2Fe-2S] cluster, the first step of the mitochondrial iron-sulfur protein biogenesis. This process is initiated by the cysteine desulfurase complex (NFS1:LYRM4:NDUFAB1) that produces persulfide which is delivered on the scaffold protein ISCU in a FXN-dependent manner. Then this complex is stabilized by FDX2 which provides reducing equivalents to accomplish the [2Fe-2S] cluster assembly. Finally, the [2Fe-2S] cluster is transferred from ISCU to chaperone proteins, including HSCB, HSPA9 and GLRX5. Essential for coenzyme Q biosynthesis: together with FDXR, transfers the electrons required for the hydroxylation reaction performed by COQ6. The chain is Ferredoxin-2, mitochondrial from Danio rerio (Zebrafish).